The sequence spans 220 residues: Endonuclease NucS (220 aa).

The protein belongs to the NucS endonuclease family.

It is found in the cytoplasm. Cleaves both 3' and 5' ssDNA extremities of branched DNA structures. In Mycobacterium leprae (strain TN), this protein is Endonuclease NucS.